The primary structure comprises 234 residues: Phosphoribosylaminoimidazole-succinocarboxamide synthase (234 aa).

It belongs to the SAICAR synthetase family.

The catalysed reaction is 5-amino-1-(5-phospho-D-ribosyl)imidazole-4-carboxylate + L-aspartate + ATP = (2S)-2-[5-amino-1-(5-phospho-beta-D-ribosyl)imidazole-4-carboxamido]succinate + ADP + phosphate + 2 H(+). It participates in purine metabolism; IMP biosynthesis via de novo pathway; 5-amino-1-(5-phospho-D-ribosyl)imidazole-4-carboxamide from 5-amino-1-(5-phospho-D-ribosyl)imidazole-4-carboxylate: step 1/2. This Streptococcus agalactiae serotype V (strain ATCC BAA-611 / 2603 V/R) protein is Phosphoribosylaminoimidazole-succinocarboxamide synthase.